We begin with the raw amino-acid sequence, 230 residues long: Probable cytokinin riboside 5'-monophosphate phosphoribohydrolase LOG4 (230 aa).

Substrate contacts are provided by residues glutamate 91, 109 to 110 (RK), and 126 to 132 (GYGTIEE).

It belongs to the LOG family.

The enzyme catalyses N(6)-(dimethylallyl)adenosine 5'-phosphate + H2O = N(6)-dimethylallyladenine + D-ribose 5-phosphate. The catalysed reaction is 9-ribosyl-trans-zeatin 5'-phosphate + H2O = trans-zeatin + D-ribose 5-phosphate. In terms of biological role, cytokinin-activating enzyme working in the direct activation pathway. Phosphoribohydrolase that converts inactive cytokinin nucleotides to the biologically active free-base forms. The protein is Probable cytokinin riboside 5'-monophosphate phosphoribohydrolase LOG4 (LOGL4) of Oryza sativa subsp. japonica (Rice).